A 323-amino-acid polypeptide reads, in one-letter code: MTAGGYTLLDGLRLMELQMNKRQAADLTDSVTCLREGAPFYQVLKSLSFHKEAVGICYFAETHGELPASMIQSGELLERKIAQADQLKRVLRYPLFLIFTVAVMFYMLQSIIIPQFSGIYQSMNMETSRSTDMLFAFFQHIDLVIILLVLFTAGIGIYYWLVFKKKSPARQMLICIRIPLVGKLVKLFNSYFFSLQLSSLLKSGLSIYDSLNAFKHQTFLPFYRCEAEQLIERLKAGESIESAICGSLFYETDLSKVISHGQLSGRLDRELFTYSQFILQRLEHKAQKWTGILQPMIYGFVAAMILLVYLSMLVPMYQMMNQM.

A run of 3 helical transmembrane segments spans residues 93-113 (YPLFLIFTVAVMFYMLQSIII), 143-163 (LVIILLVLFTAGIGIYYWLVF), and 296-316 (MIYGFVAAMILLVYLSMLVPM).

It belongs to the GSP F family.

It is found in the cell membrane. Its function is as follows. Required for transformation and DNA binding. In Bacillus subtilis (strain 168), this protein is ComG operon protein 2 (comGB).